The primary structure comprises 557 residues: Glypican-1 (557 aa).

The N-terminal stretch at 1-23 (MELRTRGWWLLCAAAALVVCARG) is a signal peptide. Cystine bridges form between cysteine 32–cysteine 68, cysteine 62–cysteine 255, cysteine 69–cysteine 258, cysteine 190–cysteine 342, cysteine 245–cysteine 278, cysteine 267–cysteine 414, and cysteine 271–cysteine 400. N-linked (GlcNAc...) asparagine glycans are attached at residues asparagine 79 and asparagine 116. The disordered stretch occupies residues 477 to 531 (FQDASDDGSGSGSGGGCPDDTCGRRVSKKSSSSRTPLTHALPGLSEQEGQKTSAA). Serine 485, serine 487, and serine 489 each carry an O-linked (Xyl...) (heparan sulfate) serine glycan. A lipid anchor (GPI-anchor amidated serine) is attached at serine 529. The propeptide at 530 to 557 (AATCPEPHSFFLLFLVTLVLAAARPRWR) is removed in mature form.

It belongs to the glypican family. S-nitrosylated in a Cu(2+)-dependent manner. Nitric acid (NO) is released from the nitrosylated cysteines by ascorbate or by some other reducing agent, in a Cu(2+) or Zn(2+) dependent manner. This free nitric oxide is then capable of cleaving the heparan sulfate side chains. In terms of processing, N- and O-glycosylated. N-glycosylation is mainly of the complex type containing sialic acid. O-glycosylated with heparan sulfate. The heparan sulfate chains can be cleaved either by the action of heparanase or, degraded by a deaminative process that uses nitric oxide (NO) released from the S-nitrosylated cysteines. This process is triggered by ascorbate, or by some other reducing agent, in a Cu(2+)- or Zn(2+) dependent manner. Cu(2+) ions are provided by ceruloproteins such as APP, PRNP or CP which associate with GCP1 in intracellular compartments or lipid rafts. Post-translationally, this cell-associated glypican is further processed to give rise to a medium-released species.

The protein localises to the cell membrane. It localises to the endosome. It is found in the secreted. Its subcellular location is the extracellular space. Cell surface proteoglycan that bears heparan sulfate. Binds, via the heparan sulfate side chains, alpha-4 (V) collagen and participates in Schwann cell myelination. May act as a catalyst in increasing the rate of conversion of prion protein PRPN(C) to PRNP(Sc) via associating (via the heparan sulfate side chains) with both forms of PRPN, targeting them to lipid rafts and facilitating their interaction. Required for proper skeletal muscle differentiation by sequestering FGF2 in lipid rafts preventing its binding to receptors (FGFRs) and inhibiting the FGF-mediated signaling. Binds Cu(2+) or Zn(2+) ions. This chain is Glypican-1 (Gpc1), found in Mus musculus (Mouse).